The primary structure comprises 128 residues: Gene 64 protein (128 aa).

This is Gene 64 protein (64) from Mycobacterium phage L5 (Mycobacteriophage L5).